Here is a 627-residue protein sequence, read N- to C-terminus: DNA-directed RNA polymerase subunit gamma (627 aa).

C70, C72, C85, and C88 together coordinate Zn(2+). Mg(2+)-binding residues include D468, D470, and D472.

Belongs to the RNA polymerase beta' chain family. RpoC1 subfamily. In terms of assembly, in cyanobacteria the RNAP catalytic core is composed of 2 alpha, 1 beta, 1 beta', 1 gamma and 1 omega subunit. When a sigma factor is associated with the core the holoenzyme is formed, which can initiate transcription. The cofactor is Mg(2+). Zn(2+) serves as cofactor.

The catalysed reaction is RNA(n) + a ribonucleoside 5'-triphosphate = RNA(n+1) + diphosphate. Functionally, DNA-dependent RNA polymerase catalyzes the transcription of DNA into RNA using the four ribonucleoside triphosphates as substrates. This Synechococcus sp. (strain JA-3-3Ab) (Cyanobacteria bacterium Yellowstone A-Prime) protein is DNA-directed RNA polymerase subunit gamma.